Consider the following 263-residue polypeptide: UPF0739 protein C1orf74 homolog (263 aa).

Belongs to the UPF0739 family.

The polypeptide is UPF0739 protein C1orf74 homolog (Rattus norvegicus (Rat)).